Consider the following 431-residue polypeptide: Putative F-box/FBD/LRR-repeat protein At3g56780 (431 aa).

The F-box domain maps to 6 to 62 (CSCINELPDDLILKILSFVSTKHVVVTSLLSKKWKSLWTRVPILKYDVRDHTRFERF). LRR repeat units lie at residues 56 to 82 (HTRF…HVEL), 88 to 113 (NKDI…EIDA), 135 to 161 (LKGI…HIDH), 162 to 187 (SSLF…MVIR), 209 to 236 (LEGL…HVAR), 237 to 262 (MEDF…TLEE), 264 to 285 (TSDV…SIIT), and 357 to 382 (CSER…KLEH). The FBD domain maps to 391 to 423 (RWEPPSLVPECLLSSLEALEWKGYTGRYGDKDL).

The chain is Putative F-box/FBD/LRR-repeat protein At3g56780 from Arabidopsis thaliana (Mouse-ear cress).